Reading from the N-terminus, the 208-residue chain is F-box/kelch-repeat protein At2g43270 (208 aa).

Residues Met1–Arg44 form the F-box domain. Residues Arg149–Gly200 form a Kelch repeat.

This Arabidopsis thaliana (Mouse-ear cress) protein is F-box/kelch-repeat protein At2g43270.